The sequence spans 89 residues: Small ribosomal subunit protein uS15 (89 aa).

The protein belongs to the universal ribosomal protein uS15 family. In terms of assembly, part of the 30S ribosomal subunit. Forms a bridge to the 50S subunit in the 70S ribosome, contacting the 23S rRNA.

One of the primary rRNA binding proteins, it binds directly to 16S rRNA where it helps nucleate assembly of the platform of the 30S subunit by binding and bridging several RNA helices of the 16S rRNA. In terms of biological role, forms an intersubunit bridge (bridge B4) with the 23S rRNA of the 50S subunit in the ribosome. The protein is Small ribosomal subunit protein uS15 of Sulfurovum sp. (strain NBC37-1).